Consider the following 447-residue polypeptide: Cysteine--tRNA ligase (447 aa).

Cys-28 is a binding site for Zn(2+). Positions 30 to 40 match the 'HIGH' region motif; sequence PTVYNYIHIGN. 3 residues coordinate Zn(2+): Cys-211, His-236, and Glu-240. A 'KMSKS' region motif is present at residues 268–272; the sequence is KMSKS. Lys-271 is a binding site for ATP.

Belongs to the class-I aminoacyl-tRNA synthetase family. As to quaternary structure, monomer. It depends on Zn(2+) as a cofactor.

The protein localises to the cytoplasm. It carries out the reaction tRNA(Cys) + L-cysteine + ATP = L-cysteinyl-tRNA(Cys) + AMP + diphosphate. The protein is Cysteine--tRNA ligase of Streptococcus agalactiae serotype V (strain ATCC BAA-611 / 2603 V/R).